A 327-amino-acid polypeptide reads, in one-letter code: Zinc transport protein ZntB (327 aa).

The Cytoplasmic portion of the chain corresponds to 1–273; the sequence is MEAIKGSEVN…SRRSYTMSLM (273 aa). A helical transmembrane segment spans residues 274–294; sequence AMVFLPSTFLTGLFGVNLGGI. Over 295-300 the chain is Periplasmic; sequence PGGGWH. Residues 301–321 form a helical membrane-spanning segment; it reads LGFSVFCVALVLLIGGVTWWL. The Cytoplasmic segment spans residues 322 to 327; it reads HRSKWL.

It belongs to the CorA metal ion transporter (MIT) (TC 1.A.35) family.

It localises to the cell inner membrane. The enzyme catalyses Zn(2+)(out) + H(+)(out) = Zn(2+)(in) + H(+)(in). Functionally, zinc transporter. Acts as a Zn(2+):proton symporter, which likely mediates zinc ion uptake. This chain is Zinc transport protein ZntB, found in Cronobacter sakazakii (strain ATCC BAA-894) (Enterobacter sakazakii).